A 450-amino-acid chain; its full sequence is tRNA modification GTPase MnmE (450 aa).

(6S)-5-formyl-5,6,7,8-tetrahydrofolate-binding residues include Lys-21, Glu-78, and Lys-117. The TrmE-type G domain maps to 213 to 376 (GHALSIIGKP…LSQKISAFFP (164 aa)). Asn-223 provides a ligand contact to K(+). Residues 223–228 (NAGKSS), 242–248 (SDIKGTT), and 267–270 (DTAG) each bind GTP. Ser-227 serves as a coordination point for Mg(2+). K(+) contacts are provided by Ser-242, Ile-244, and Thr-247. Thr-248 provides a ligand contact to Mg(2+). Lys-450 serves as a coordination point for (6S)-5-formyl-5,6,7,8-tetrahydrofolate.

The protein belongs to the TRAFAC class TrmE-Era-EngA-EngB-Septin-like GTPase superfamily. TrmE GTPase family. As to quaternary structure, homodimer. Heterotetramer of two MnmE and two MnmG subunits. K(+) is required as a cofactor.

It localises to the cytoplasm. Its function is as follows. Exhibits a very high intrinsic GTPase hydrolysis rate. Involved in the addition of a carboxymethylaminomethyl (cmnm) group at the wobble position (U34) of certain tRNAs, forming tRNA-cmnm(5)s(2)U34. In Helicobacter acinonychis (strain Sheeba), this protein is tRNA modification GTPase MnmE.